The chain runs to 85 residues: Exodeoxyribonuclease 7 small subunit (85 aa).

The tract at residues 66–85 (SGEGEEVPLDTPDAEDGDGE) is disordered. A compositionally biased stretch (acidic residues) spans 68-85 (EGEEVPLDTPDAEDGDGE).

Belongs to the XseB family. Heterooligomer composed of large and small subunits.

Its subcellular location is the cytoplasm. It catalyses the reaction Exonucleolytic cleavage in either 5'- to 3'- or 3'- to 5'-direction to yield nucleoside 5'-phosphates.. Its function is as follows. Bidirectionally degrades single-stranded DNA into large acid-insoluble oligonucleotides, which are then degraded further into small acid-soluble oligonucleotides. This is Exodeoxyribonuclease 7 small subunit from Thioalkalivibrio sulfidiphilus (strain HL-EbGR7).